A 559-amino-acid polypeptide reads, in one-letter code: Potassium-transporting ATPase potassium-binding subunit (559 aa).

The next 13 membrane-spanning stretches (helical) occupy residues 5 to 25 (GFLLIASFLLILLVLAKPLGS), 27 to 47 (LARLIAAVPLPGVAGVERILW), 63 to 83 (LLALLTLNLLGLGILFCLLFW), 132 to 152 (GLTVQNFLSAATGIAVVFALI), 170 to 190 (LVRITLWILFPVALIIALFFI), 253 to 273 (LAQMLAIFLIPAALCFAFGEA), 283 to 303 (LLWAMSFIFVVCVAVVMWAEV), 327 to 347 (FGVLASSLFAVVTTAASCGAV), 356 to 376 (ALGGMVPMWLMQIGEVVFGGV), 379 to 399 (GLYGMLLFVLLAVFIAGLMIG), 416 to 436 (MTALAILVTPMLVLLGSALAM), 484 to 504 (LLAFCMFVGRFGVIIPVMAIA), and 524 to 544 (GALFIGLLIGTVLLVGALTFI).

The protein belongs to the KdpA family. The system is composed of three essential subunits: KdpA, KdpB and KdpC.

The protein localises to the cell inner membrane. In terms of biological role, part of the high-affinity ATP-driven potassium transport (or Kdp) system, which catalyzes the hydrolysis of ATP coupled with the electrogenic transport of potassium into the cytoplasm. This subunit binds the periplasmic potassium ions and delivers the ions to the membrane domain of KdpB through an intramembrane tunnel. The chain is Potassium-transporting ATPase potassium-binding subunit from Salmonella dublin (strain CT_02021853).